We begin with the raw amino-acid sequence, 301 residues long: MNWITNYVRPRINSMLGRREVPENLWIKCPETGEMVFHKDLESNKWVIPASGYHMKMPAKARLADLFDNGEYESLPQPKVAQDPLKFRDSKKYIDRLRDSRVKTEQEDTILAGLGKVRGLKLVAVVHEFNFIGGSLGIAAGEAIVKAFERATLEKCPLVMFPASGGARMQEGILSLMQLPRTTVAVDLLKESGQPYVVVLTNPTTGGVTASYAMLGDIHLAEPGAEIGFAGKRVIEQTLREKLPEGFQTSEYLLEHGMVDMVVKRHDIPETLARLLKILTKKPVSAANDMNGGAIALAASA.

Positions 25–294 (LWIKCPETGE…SAANDMNGGA (270 aa)) constitute a CoA carboxyltransferase N-terminal domain.

It belongs to the AccD/PCCB family. In terms of assembly, acetyl-CoA carboxylase is a heterohexamer composed of biotin carboxyl carrier protein (AccB), biotin carboxylase (AccC) and two subunits each of ACCase subunit alpha (AccA) and ACCase subunit beta (AccD).

The protein resides in the cytoplasm. The catalysed reaction is N(6)-carboxybiotinyl-L-lysyl-[protein] + acetyl-CoA = N(6)-biotinyl-L-lysyl-[protein] + malonyl-CoA. The protein operates within lipid metabolism; malonyl-CoA biosynthesis; malonyl-CoA from acetyl-CoA: step 1/1. Functionally, component of the acetyl coenzyme A carboxylase (ACC) complex. Biotin carboxylase (BC) catalyzes the carboxylation of biotin on its carrier protein (BCCP) and then the CO(2) group is transferred by the transcarboxylase to acetyl-CoA to form malonyl-CoA. The polypeptide is Acetyl-coenzyme A carboxylase carboxyl transferase subunit beta (Rhizobium etli (strain CIAT 652)).